A 118-amino-acid polypeptide reads, in one-letter code: Basic phospholipase A2 CM-II (118 aa).

Intrachain disulfides connect Cys-11-Cys-70, Cys-26-Cys-117, Cys-28-Cys-44, Cys-43-Cys-98, Cys-50-Cys-91, Cys-59-Cys-84, and Cys-77-Cys-89. Residues Tyr-27, Gly-29, and Gly-31 each coordinate Ca(2+). His-47 is an active-site residue. Asp-48 provides a ligand contact to Ca(2+). Asp-92 is an active-site residue.

It belongs to the phospholipase A2 family. Group I subfamily. D49 sub-subfamily. The cofactor is Ca(2+). Expressed by the venom gland.

It localises to the secreted. The enzyme catalyses a 1,2-diacyl-sn-glycero-3-phosphocholine + H2O = a 1-acyl-sn-glycero-3-phosphocholine + a fatty acid + H(+). Snake venom phospholipase A2 (PLA2) that causes myonecrosis when injected intramuscularly, causes neuromuscular blockade with a gradual contracture and a decreased sensitivity to ACh and KCl (in the chick biventer cervicis nerve-muscle preparation), abolishes twitches evoked by indirect stimulation earlier than those by direct stimulation (in the mouse phrenic nerve-diaphragm preparation), shows indirect hemolytic activity, and shows weak anticoagulant activity. PLA2 catalyzes the calcium-dependent hydrolysis of the 2-acyl groups in 3-sn-phosphoglycerides. This Naja mossambica (Mozambique spitting cobra) protein is Basic phospholipase A2 CM-II.